Here is a 440-residue protein sequence, read N- to C-terminus: Proline--tRNA ligase (440 aa).

Belongs to the class-II aminoacyl-tRNA synthetase family. ProS type 2 subfamily. As to quaternary structure, homodimer.

Its subcellular location is the cytoplasm. It carries out the reaction tRNA(Pro) + L-proline + ATP = L-prolyl-tRNA(Pro) + AMP + diphosphate. In terms of biological role, catalyzes the attachment of proline to tRNA(Pro) in a two-step reaction: proline is first activated by ATP to form Pro-AMP and then transferred to the acceptor end of tRNA(Pro). In Agrobacterium fabrum (strain C58 / ATCC 33970) (Agrobacterium tumefaciens (strain C58)), this protein is Proline--tRNA ligase.